The primary structure comprises 183 residues: Dermatopontin (183 aa).

Residue Q1 is modified to Pyrrolidone carboxylic acid. Y5 carries the post-translational modification Sulfotyrosine. 4 repeat units span residues 8-61 (PYQQ…ACMP), 52-57 (DRQWNY), 62-117 (TPQS…CCRY), and 107-112 (DREWQF). Residues 8–117 (PYQQYHDYSD…REWQFYCCRY (110 aa)) are 2 X 53-55 AA tandem repeats. Intrachain disulfides connect C32/C59, C72/C114, C88/C115, C121/C178, and C125/C171. A 3 X 6 AA tandem repeats of D-R-[EQ]-W-[NQK]-[FY] region spans residues 52–168 (DRQWNYACMP…AVERDRQWKF (117 aa)). A sulfotyrosine mark is found at Y144, Y146, Y148, and Y149. One copy of the 2-3 repeat lies at 163 to 168 (DRQWKF). Sulfotyrosine is present on Y176.

It belongs to the dermatopontin family. In terms of assembly, interacts with TGFB1, DCN and collagen. Sulfated on tyrosine residue(s). In terms of tissue distribution, detected in skin, skeletal muscle, heart, lung, articular cartilage, long bone and calvaria. Smaller amounts detected in kidney. Not detected in brain, liver or spleen.

It localises to the secreted. The protein resides in the extracellular space. Its subcellular location is the extracellular matrix. Functionally, seems to mediate adhesion by cell surface integrin binding. May serve as a communication link between the dermal fibroblast cell surface and its extracellular matrix environment. Enhances TGFB1 activity. Inhibits cell proliferation. Accelerates collagen fibril formation, and stabilizes collagen fibrils against low-temperature dissociation. This is Dermatopontin (DPT) from Sus scrofa (Pig).